Reading from the N-terminus, the 396-residue chain is Putative glutamate--cysteine ligase 2-2 (396 aa).

It belongs to the glutamate--cysteine ligase type 2 family. YbdK subfamily.

It carries out the reaction L-cysteine + L-glutamate + ATP = gamma-L-glutamyl-L-cysteine + ADP + phosphate + H(+). Functionally, ATP-dependent carboxylate-amine ligase which exhibits weak glutamate--cysteine ligase activity. This Mycolicibacterium smegmatis (strain ATCC 700084 / mc(2)155) (Mycobacterium smegmatis) protein is Putative glutamate--cysteine ligase 2-2.